The primary structure comprises 379 residues: Putative acetyl-CoA C-acetyltransferase VraB (379 aa).

Cys-86 acts as the Acyl-thioester intermediate in catalysis. The active-site Proton acceptor is His-338.

This sequence belongs to the thiolase-like superfamily. Thiolase family.

The sequence is that of Putative acetyl-CoA C-acetyltransferase VraB (vraB) from Staphylococcus aureus (strain MRSA252).